We begin with the raw amino-acid sequence, 354 residues long: DNA-binding protein EMBP-1 (354 aa).

Disordered regions lie at residues 1–24, 106–193, and 230–273; these read MASSSSATSGDDRPPAAGGGTPAQ, SAAG…RSAS, and EVNA…RKQQ. Composition is skewed to low complexity over residues 127 to 140 and 232 to 245; these read SSSGSGDAGSQGSS and NAAASSQSNASLSQ. Residues 246-265 show a composition bias toward basic and acidic residues; that stretch reads MDERELKRERRKQSNRESAR. Residues 250-313 enclose the bZIP domain; the sequence is ELKRERRKQS…KTMETENKKL (64 aa). Residues 252–271 form a basic motif region; sequence KRERRKQSNRESARRSRLRK. The segment at 278-299 is leucine-zipper; that stretch reads LAQKVSELTAANGTLRSELDQL.

It belongs to the bZIP family. As to quaternary structure, heterodimer.

It localises to the nucleus. Its function is as follows. Interacts specifically with the 8-bp sequence 5'-CACGTGGC-3'in the abscisic acid response element (ABARE). Also binds to the hexamer motif 5'-ACGTCA-3' of histone gene promoters. The protein is DNA-binding protein EMBP-1 of Triticum aestivum (Wheat).